Reading from the N-terminus, the 423-residue chain is Protein CLP1 homolog (423 aa).

Residues Glu16, Lys57, and 119–124 (DVGKST) contribute to the ATP site.

It belongs to the Clp1 family. Clp1 subfamily.

The protein localises to the nucleus. Functionally, required for endonucleolytic cleavage during polyadenylation-dependent pre-mRNA 3'-end formation. This Drosophila yakuba (Fruit fly) protein is Protein CLP1 homolog (cbc).